Consider the following 415-residue polypeptide: D-galactonate dehydratase family member RspA (415 aa).

The substrate site is built by Asn-48 and His-133. The active-site Proton donor/acceptor is Tyr-170. Position 223 (Asp-223) interacts with Mg(2+). The Proton donor/acceptor role is filled by His-225. Positions 249, 250, and 275 each coordinate Mg(2+). Positions 275, 296, 325, 329, and 352 each coordinate substrate.

Belongs to the mandelate racemase/muconate lactonizing enzyme family. GalD subfamily. Requires Mg(2+) as cofactor.

It catalyses the reaction D-mannonate = 2-dehydro-3-deoxy-D-gluconate + H2O. Its function is as follows. Has low D-mannonate dehydratase activity (in vitro), suggesting that this is not a physiological substrate and that it has no significant role in D-mannonate degradation in vivo. Has no detectable activity with a panel of 70 other acid sugars (in vitro). This is D-galactonate dehydratase family member RspA (rspA) from Escherichia coli O6:H1 (strain CFT073 / ATCC 700928 / UPEC).